The chain runs to 130 residues: Small ribosomal subunit protein uS9 (130 aa).

The segment at 109 to 130 (RVKERKKPGLKKARKARQFSKR) is disordered. Residues 111 to 130 (KERKKPGLKKARKARQFSKR) are compositionally biased toward basic residues.

This sequence belongs to the universal ribosomal protein uS9 family.

The polypeptide is Small ribosomal subunit protein uS9 (Mycoplasma mobile (strain ATCC 43663 / 163K / NCTC 11711) (Mesomycoplasma mobile)).